Reading from the N-terminus, the 457-residue chain is MHISKPAGPLPASVPFYRQLYFQVVVAIILGALLGRFEPAFAESLKPLGDAFIKLVKMIIAPVIFLTIVTGIAGMTHLKTVGRVFGKAMVYFLFFSTLALVVGLVVAHVVQPGAGMNINPADLDQSAVKSYVEKSHDLTLVGFLMDIIPNSLIGAFTGDQVVNGKLTGPNILQVLFVAVLFGVSLALVGERGKPVLNLLEALIAPVFKLVHILMRAAPIGAFGAIAFTIGKYGVESLVNLAWLVGSFYLTSLLFVLVILGVVCRLCGFSVLKLIRYLKAELLLVLGTSSSESALPSLMEKMEKAGCEKSVVGLVVPTGYSFNLDGTNIYMTLAALFIAQATNTELTLGHQIALLAVAMLSSKGAAGVTGAGFITLAATLAVVPEVPVAGMALILGVDRFMSECRSLTNFIGNAVATVVVSRWENALDRDRLTLVLDGGEPPLLAPVGEPGVAPAALR.

9 helical membrane passes run 22-42 (FQVV…PAFA), 55-75 (LVKM…IAGM), 90-110 (VYFL…AHVV), 138-158 (LTLV…AFTG), 168-188 (GPNI…LALV), 209-229 (LVHI…AFTI), 242-262 (WLVG…LGVV), 335-357 (LFIA…LAVA), and 376-396 (AATL…ILGV).

Belongs to the dicarboxylate/amino acid:cation symporter (DAACS) (TC 2.A.23) family.

Its subcellular location is the cell inner membrane. Responsible for the transport of dicarboxylates such as succinate, fumarate, and malate from the periplasm across the membrane. The sequence is that of C4-dicarboxylate transport protein from Xanthomonas oryzae pv. oryzae (strain MAFF 311018).